The chain runs to 388 residues: Succinate--CoA ligase [ADP-forming] subunit beta (388 aa).

An ATP-grasp domain is found at 9-244 (KEIFRSMGVA…LEEEDPKEIE (236 aa)). ATP-binding positions include lysine 46, 53-55 (GRG), glutamate 99, cysteine 102, and glutamate 107. Mg(2+) is bound by residues asparagine 199 and aspartate 213. Residues asparagine 264 and 321-323 (GIM) contribute to the substrate site.

Belongs to the succinate/malate CoA ligase beta subunit family. In terms of assembly, heterotetramer of two alpha and two beta subunits. Mg(2+) serves as cofactor.

It carries out the reaction succinate + ATP + CoA = succinyl-CoA + ADP + phosphate. The catalysed reaction is GTP + succinate + CoA = succinyl-CoA + GDP + phosphate. Its pathway is carbohydrate metabolism; tricarboxylic acid cycle; succinate from succinyl-CoA (ligase route): step 1/1. Its function is as follows. Succinyl-CoA synthetase functions in the citric acid cycle (TCA), coupling the hydrolysis of succinyl-CoA to the synthesis of either ATP or GTP and thus represents the only step of substrate-level phosphorylation in the TCA. The beta subunit provides nucleotide specificity of the enzyme and binds the substrate succinate, while the binding sites for coenzyme A and phosphate are found in the alpha subunit. In Staphylococcus aureus (strain MRSA252), this protein is Succinate--CoA ligase [ADP-forming] subunit beta.